Consider the following 103-residue polypeptide: Cell division protein FtsB (103 aa).

Residues 1 to 3 are Cytoplasmic-facing; the sequence is MGK. A helical transmembrane segment spans residues 4–21; that stretch reads LTLLLLAILVWLQYSLWF. Residues 22 to 103 are Periplasmic-facing; it reads GKNGIHDYTR…RAQSAGQNNR (82 aa). The stretch at 31–71 forms a coiled coil; it reads RVNDDVAAQQATNAKLKARNDQLFAEIDDLNGGQEALEERA.

Belongs to the FtsB family. Part of a complex composed of FtsB, FtsL and FtsQ.

It localises to the cell inner membrane. Its function is as follows. Essential cell division protein. May link together the upstream cell division proteins, which are predominantly cytoplasmic, with the downstream cell division proteins, which are predominantly periplasmic. The chain is Cell division protein FtsB from Escherichia coli O157:H7.